A 256-amino-acid polypeptide reads, in one-letter code: (R)-S-adenosyl-L-methionine hydrolase (256 aa).

Adenosine is bound by residues Asp-7, His-41, Asp-68, and Asn-183. The (R)-S-adenosyl-L-methionine site is built by Asn-183, Tyr-212, Ser-226, Glu-231, Val-234, and Met-236. Val-234 lines the adenosine pocket.

The protein belongs to the SAM hydrolase / SAM-dependent halogenase family. Homotrimer.

It catalyses the reaction (R)-S-adenosyl-L-methionine + H2O = adenosine + L-methionine + H(+). Its function is as follows. Catalyzes the hydrolysis of S-adenosyl-L-methionine (SAM) into adenosine and L-methionine. Is likely stereoselective, specifically hydrolyzing (R)-S-adenosyl-L-methionine ((R)-SAM), the inactive form of the ubiquitous cofactor SAM, and not the active form of SAM, (S)-S-adenosyl-L-methionine. Probaly plays a role in preventing accumulation of (R)-S-adenosyl-L-methionine in cells; maintenance of (S)-S-denosyl-L-methionine homochirality is important for cellular health given that the (R)-form is largely inactive as a methyl donor and can function as an inhibitor of methyltransferases. Is unable to mediate a fluorination or chlorination reaction with SAM. This chain is (R)-S-adenosyl-L-methionine hydrolase, found in Pyrococcus horikoshii (strain ATCC 700860 / DSM 12428 / JCM 9974 / NBRC 100139 / OT-3).